A 372-amino-acid chain; its full sequence is Glutamate 5-kinase (372 aa).

Residue Lys-14 participates in ATP binding. Ser-54, Asp-141, and Asn-153 together coordinate substrate. Residues 173–174 (TD) and 215–221 (TGGMATK) each bind ATP. Residues 280–358 (KGKLVLDVGA…DEIESLLGYD (79 aa)) enclose the PUA domain.

The protein belongs to the glutamate 5-kinase family.

It localises to the cytoplasm. The enzyme catalyses L-glutamate + ATP = L-glutamyl 5-phosphate + ADP. Its pathway is amino-acid biosynthesis; L-proline biosynthesis; L-glutamate 5-semialdehyde from L-glutamate: step 1/2. Catalyzes the transfer of a phosphate group to glutamate to form L-glutamate 5-phosphate. The polypeptide is Glutamate 5-kinase (Shewanella woodyi (strain ATCC 51908 / MS32)).